Reading from the N-terminus, the 183-residue chain is Large ribosomal subunit protein eL18 (183 aa).

The segment at 146–183 (HFGPAPGVPHSHTKPYVRSKGRKFEKARGRRKSRGFRV) is disordered. 2 stretches are compositionally biased toward basic residues: residues 156–166 (SHTKPYVRSKG) and 173–183 (RGRRKSRGFRV).

It belongs to the eukaryotic ribosomal protein eL18 family.

The chain is Large ribosomal subunit protein eL18 (RPL18) from Cicer arietinum (Chickpea).